A 562-amino-acid polypeptide reads, in one-letter code: Phosphoglucomutase-1 (562 aa).

An N-acetylmethionine modification is found at Met-1. Position 16 is an N6-acetyllysine (Lys-16). Arg-23 provides a ligand contact to alpha-D-glucose 1,6-bisphosphate. Thr-115 is subject to Phosphothreonine. Residue Ser-117 coordinates alpha-D-glucose 1,6-bisphosphate. The active-site Phosphoserine intermediate is Ser-117. Mg(2+) is bound at residue Ser-117. Ser-117 and Ser-134 each carry phosphoserine. Thr-185 carries the phosphothreonine modification. Position 213 is a phosphoserine (Ser-213). Asp-288, Asp-290, and Asp-292 together coordinate Mg(2+). Alpha-D-glucose 1,6-bisphosphate-binding residues include Asp-292 and Arg-293. At Lys-349 the chain carries N6-acetyllysine. Position 353 is a phosphotyrosine (Tyr-353). Thr-357 serves as a coordination point for alpha-D-glucose 1,6-bisphosphate. Ser-369 is modified (phosphoserine). 3 residues coordinate alpha-D-glucose 1,6-bisphosphate: Glu-376, Ser-378, and Lys-389. Position 378 is a phosphoserine (Ser-378). N6-succinyllysine is present on Lys-419. A Phosphothreonine; by PAK1 modification is found at Thr-467. Ser-477, Ser-485, and Ser-505 each carry phosphoserine. Residue Thr-507 is modified to Phosphothreonine. Residues Ser-509 and Ser-541 each carry the phosphoserine modification.

It belongs to the phosphohexose mutase family. Monomer. The cofactor is Mg(2+). Phosphorylation at Thr-467 by PAK1 significantly enhances enzymatic activity.

Its subcellular location is the cytoplasm. The catalysed reaction is alpha-D-glucose 1-phosphate = alpha-D-glucose 6-phosphate. The enzyme catalyses O-phospho-L-seryl-[protein] + alpha-D-glucose 1-phosphate = alpha-D-glucose 1,6-bisphosphate + L-seryl-[protein]. It catalyses the reaction alpha-D-glucose 1,6-bisphosphate + L-seryl-[protein] = O-phospho-L-seryl-[protein] + alpha-D-glucose 6-phosphate. In terms of biological role, catalyzes the reversible isomerization of alpha-D-glucose 1-phosphate to alpha-D-glucose 6-phosphate. The mechanism proceeds via the intermediate compound alpha-D-glucose 1,6-bisphosphate. This enzyme participates in both the breakdown and synthesis of glucose. The sequence is that of Phosphoglucomutase-1 (PGM1) from Bos taurus (Bovine).